Here is a 147-residue protein sequence, read N- to C-terminus: Transthyretin (147 aa).

The N-terminal stretch at 1-20 (MASRRLLLLCLAGLVLVTEA) is a signal peptide. A Sulfocysteine modification is found at C30. K35 contacts L-thyroxine. E62 carries the post-translational modification 4-carboxyglutamate. E74 is a binding site for L-thyroxine. An N-linked (GlcNAc...) asparagine glycan is attached at N118. S137 is an L-thyroxine binding site.

The protein belongs to the transthyretin family. As to quaternary structure, homotetramer. Dimer of dimers. In the homotetramer, subunits assemble around a central channel that can accommodate two ligand molecules. Interacts with RBP4. In terms of processing, sulfonation of the reactive cysteine Cys-30 enhances the stability of the native conformation of TTR, avoiding misassembly of the protein leading to amyloid formation. In terms of tissue distribution, detected in serum (at protein level). Detected in liver.

Its subcellular location is the secreted. Its function is as follows. Thyroid hormone-binding protein. Probably transports thyroxine from the bloodstream to the brain. The chain is Transthyretin (TTR) from Sorex araneus (Eurasian common shrew).